The chain runs to 92 residues: CRISPR-associated endoribonuclease Cas2 3 (92 aa).

Residue Asp9 coordinates Mg(2+).

It belongs to the CRISPR-associated endoribonuclease Cas2 protein family. Homodimer, forms a heterotetramer with a Cas1 homodimer. Requires Mg(2+) as cofactor.

Its function is as follows. CRISPR (clustered regularly interspaced short palindromic repeat), is an adaptive immune system that provides protection against mobile genetic elements (viruses, transposable elements and conjugative plasmids). CRISPR clusters contain sequences complementary to antecedent mobile elements and target invading nucleic acids. CRISPR clusters are transcribed and processed into CRISPR RNA (crRNA). Functions as a ssRNA-specific endoribonuclease. Involved in the integration of spacer DNA into the CRISPR cassette. This chain is CRISPR-associated endoribonuclease Cas2 3, found in Synechocystis sp. (strain ATCC 27184 / PCC 6803 / Kazusa).